A 540-amino-acid polypeptide reads, in one-letter code: GMP synthase [glutamine-hydrolyzing] (540 aa).

One can recognise a Glutamine amidotransferase type-1 domain in the interval 26-216 (IIIILDFGSQ…VYHICECEPT (191 aa)). The Nucleophile role is filled by C103. Active-site residues include H190 and E192. Residues 217–415 (WTTAAFVEEA…VGLPEEIVQR (199 aa)) form the GMPS ATP-PPase domain. 244 to 250 (SGGVDSS) contributes to the ATP binding site.

Homodimer.

It carries out the reaction XMP + L-glutamine + ATP + H2O = GMP + L-glutamate + AMP + diphosphate + 2 H(+). The protein operates within purine metabolism; GMP biosynthesis; GMP from XMP (L-Gln route): step 1/1. In terms of biological role, catalyzes the synthesis of GMP from XMP. The sequence is that of GMP synthase [glutamine-hydrolyzing] from Nostoc sp. (strain PCC 7120 / SAG 25.82 / UTEX 2576).